The primary structure comprises 373 residues: Nuclear hormone receptor family member nhr-69 (373 aa).

The segment at residues 3 to 78 (EEICHICNDK…AGMKSNAIQN (76 aa)) is a DNA-binding region (nuclear receptor). NR C4-type zinc fingers lie at residues 6–26 (CHICNDKSTGKHYGAISCDGC) and 42–66 (CRFEQNCDVTKNKRNACRACRLQKC). The NR LBD domain maps to 93-344 (EKEDLIDQLV…SLMEELILND (252 aa)).

The protein belongs to the nuclear hormone receptor family. Interacts with R-SMAD daf-8. Expressed in the ASI neurons, hypodermis, and in tail neurons.

Its subcellular location is the nucleus. In terms of biological role, orphan nuclear receptor which, in cooperation with R-SMAD daf-8, modulates the Insulin/IGF-1-like signaling (IIS) pathway, perhaps by regulating expression of the potassium channel exp-2, which in turn modulates the secretion of insulin-like peptide daf-28. The protein is Nuclear hormone receptor family member nhr-69 (nhr-69) of Caenorhabditis elegans.